The primary structure comprises 314 residues: Olfactory receptor 5G9 (314 aa).

Residues 1-25 (MADENYTRITEFIFIGLRYHPNLQV) lie on the Extracellular side of the membrane. Residue N5 is glycosylated (N-linked (GlcNAc...) asparagine). A helical transmembrane segment spans residues 26 to 46 (FLFLLFLLFYLVTMTGNLGMI). Over 47–54 (ILIRVDSR) the chain is Cytoplasmic. The chain crosses the membrane as a helical span at residues 55-75 (LHTPMYFFLSHLSFVDICFSS). Residues 76–99 (VVAPKMLTDFFADKKAISFLGCVL) are Extracellular-facing. The cysteines at positions 97 and 189 are disulfide-linked. Residues 100–120 (QQWFFGFFVAIECLLLASMAY) form a helical membrane-spanning segment. Residues 121 to 133 (DRYVAICNPLLYS) lie on the Cytoplasmic side of the membrane. The chain crosses the membrane as a helical span at residues 134 to 154 (VAMSQRLCIQLVIGPYAVGFF). Over 155–196 (NTMTHTTAAFRLPFCGSNIINHFFCDMSPILSLICADIRINK) the chain is Extracellular. Residues 197–217 (LLVFIVAGAVLIVSSTTIIVS) form a helical membrane-spanning segment. At 218–237 (YFHILIAILRIRSAEGRRKA) the chain is on the cytoplasmic side. A helical membrane pass occupies residues 238–258 (FSTCSSHVTAVSILYGTLFFI). Topologically, residues 259-271 (YVRPSAISSLDLN) are extracellular. A helical membrane pass occupies residues 272 to 292 (KVVSVFYTAVIPMLNPLIYSL). Topologically, residues 293–314 (RNKEVKSAMGRTVAKAKVFLKN) are cytoplasmic.

The protein belongs to the G-protein coupled receptor 1 family.

Its subcellular location is the cell membrane. Its function is as follows. Potential odorant receptor. This chain is Olfactory receptor 5G9, found in Mus musculus (Mouse).